The chain runs to 351 residues: Biotin synthase (351 aa).

Residues 48-265 form the Radical SAM core domain; the sequence is NKVRIHILDN…LCMFRLINPD (218 aa). Positions 63, 67, and 70 each coordinate [4Fe-4S] cluster. [2Fe-2S] cluster is bound by residues C107, C139, C199, and R269.

Belongs to the radical SAM superfamily. Biotin synthase family. As to quaternary structure, homodimer. The cofactor is [4Fe-4S] cluster. [2Fe-2S] cluster serves as cofactor.

It carries out the reaction (4R,5S)-dethiobiotin + (sulfur carrier)-SH + 2 reduced [2Fe-2S]-[ferredoxin] + 2 S-adenosyl-L-methionine = (sulfur carrier)-H + biotin + 2 5'-deoxyadenosine + 2 L-methionine + 2 oxidized [2Fe-2S]-[ferredoxin]. Its pathway is cofactor biosynthesis; biotin biosynthesis; biotin from 7,8-diaminononanoate: step 2/2. Catalyzes the conversion of dethiobiotin (DTB) to biotin by the insertion of a sulfur atom into dethiobiotin via a radical-based mechanism. The protein is Biotin synthase of Leptospira interrogans serogroup Icterohaemorrhagiae serovar copenhageni (strain Fiocruz L1-130).